The primary structure comprises 370 residues: Aminomethyltransferase (370 aa).

This sequence belongs to the GcvT family. As to quaternary structure, the glycine cleavage system is composed of four proteins: P, T, L and H.

It catalyses the reaction N(6)-[(R)-S(8)-aminomethyldihydrolipoyl]-L-lysyl-[protein] + (6S)-5,6,7,8-tetrahydrofolate = N(6)-[(R)-dihydrolipoyl]-L-lysyl-[protein] + (6R)-5,10-methylene-5,6,7,8-tetrahydrofolate + NH4(+). Its function is as follows. The glycine cleavage system catalyzes the degradation of glycine. The chain is Aminomethyltransferase from Clostridium botulinum (strain Langeland / NCTC 10281 / Type F).